Reading from the N-terminus, the 232-residue chain is 2,3,4,5-tetrahydropyridine-2,6-dicarboxylate N-acetyltransferase (232 aa).

Belongs to the transferase hexapeptide repeat family. DapH subfamily.

The enzyme catalyses (S)-2,3,4,5-tetrahydrodipicolinate + acetyl-CoA + H2O = L-2-acetamido-6-oxoheptanedioate + CoA. The protein operates within amino-acid biosynthesis; L-lysine biosynthesis via DAP pathway; LL-2,6-diaminopimelate from (S)-tetrahydrodipicolinate (acetylase route): step 1/3. Catalyzes the transfer of an acetyl group from acetyl-CoA to tetrahydrodipicolinate. The chain is 2,3,4,5-tetrahydropyridine-2,6-dicarboxylate N-acetyltransferase from Streptococcus gordonii (strain Challis / ATCC 35105 / BCRC 15272 / CH1 / DL1 / V288).